Reading from the N-terminus, the 196-residue chain is Imidazoleglycerol-phosphate dehydratase (196 aa).

Belongs to the imidazoleglycerol-phosphate dehydratase family.

The protein localises to the cytoplasm. The catalysed reaction is D-erythro-1-(imidazol-4-yl)glycerol 3-phosphate = 3-(imidazol-4-yl)-2-oxopropyl phosphate + H2O. It functions in the pathway amino-acid biosynthesis; L-histidine biosynthesis; L-histidine from 5-phospho-alpha-D-ribose 1-diphosphate: step 6/9. The chain is Imidazoleglycerol-phosphate dehydratase from Chlorobium chlorochromatii (strain CaD3).